A 393-amino-acid polypeptide reads, in one-letter code: Sulfate adenylyltransferase (393 aa).

Belongs to the sulfate adenylyltransferase family.

It carries out the reaction sulfate + ATP + H(+) = adenosine 5'-phosphosulfate + diphosphate. It functions in the pathway sulfur metabolism; hydrogen sulfide biosynthesis; sulfite from sulfate: step 1/3. The protein is Sulfate adenylyltransferase of Symbiobacterium thermophilum (strain DSM 24528 / JCM 14929 / IAM 14863 / T).